The chain runs to 69 residues: Small ribosomal subunit protein bS21 (69 aa).

This sequence belongs to the bacterial ribosomal protein bS21 family.

This chain is Small ribosomal subunit protein bS21, found in Hyphomonas neptunium (strain ATCC 15444).